The chain runs to 185 residues: HTH-type transcriptional regulator SACOL2593 (185 aa).

One can recognise an HTH tetR-type domain in the interval 6–66; it reads KENRQRIEEI…YVIQRDLDIF (61 aa). Residues 29–48 constitute a DNA-binding region (H-T-H motif); it reads SMNRIAKELGIGMGTLYRHF.

The chain is HTH-type transcriptional regulator SACOL2593 from Staphylococcus aureus (strain COL).